A 201-amino-acid chain; its full sequence is Ribosome maturation factor RimP (201 aa).

The protein belongs to the RimP family.

Its subcellular location is the cytoplasm. Required for maturation of 30S ribosomal subunits. The chain is Ribosome maturation factor RimP from Rhizobium johnstonii (strain DSM 114642 / LMG 32736 / 3841) (Rhizobium leguminosarum bv. viciae).